A 306-amino-acid polypeptide reads, in one-letter code: MRVVFMGTPEFSVPILTAIIGHGYEVVAAYTQPPRPAGRRGLELTRSPVHEKAEQFGIPVFTPKSLKGAEEQDVFASLEADVAIVVAYGLLLPKAILDAPRLGCYNGHASLLPRWRGAAPIQRAIMAGDAETGMMIMKMDEGLDTGPVAMAEKVAITPDMTAGELHDRLSMIGADLMIRALGALERESLALQPQAEEGVTYAAKIDKAEARIDWSKPAKDVHNSIRGLSPFPGAWCEMEINGAVERVKLQRSTLGEGSGAPGTVLDDRLTIACGEGAVRLATLQRSGGKPLPAQEFLRGQRVTKVL.

S110–P113 lines the (6S)-5,6,7,8-tetrahydrofolate pocket.

This sequence belongs to the Fmt family.

It carries out the reaction L-methionyl-tRNA(fMet) + (6R)-10-formyltetrahydrofolate = N-formyl-L-methionyl-tRNA(fMet) + (6S)-5,6,7,8-tetrahydrofolate + H(+). Functionally, attaches a formyl group to the free amino group of methionyl-tRNA(fMet). The formyl group appears to play a dual role in the initiator identity of N-formylmethionyl-tRNA by promoting its recognition by IF2 and preventing the misappropriation of this tRNA by the elongation apparatus. The protein is Methionyl-tRNA formyltransferase of Brucella suis biovar 1 (strain 1330).